A 330-amino-acid chain; its full sequence is G-protein coupled receptor 3 (330 aa).

At 1-42 (MMWGAGSSMAWFSAGSGSVNVSSVDPVEEPTGPATLLPSPRA) the chain is on the extracellular side. An N-linked (GlcNAc...) asparagine glycan is attached at asparagine 20. The chain crosses the membrane as a helical span at residues 43–62 (WDVVLCISGTLVSCENALVV). Over 63-74 (AIIVGTPAFRAP) the chain is Cytoplasmic. The chain crosses the membrane as a helical span at residues 75 to 98 (MFLLVGSLAVADLLAGLGLVLHFA). Residues 99–110 (ADFCIGSPEMSL) are Extracellular-facing. Residues 111–132 (MLVGVLAMAFTASIGSLLAITV) form a helical membrane-spanning segment. The Cytoplasmic portion of the chain corresponds to 133-153 (DRYLSLYNALTYYSETTVTRT). Residues 154-173 (YVMLALVWVGALGLGLVPVL) traverse the membrane as a helical segment. Residues 174 to 198 (AWNCRDGLTTCGVVYPLSKNHLVVL) are Extracellular-facing. Residues 199–217 (AIAFFMVFGIMLQLYAQIC) form a helical membrane-spanning segment. Over 218–245 (RIVCRHAQQIALQRHLLPASHYVATRKG) the chain is Cytoplasmic. A helical transmembrane segment spans residues 246 to 272 (IATLAVVLGAFAACWLPFTVYCLLGDA). Topologically, residues 273 to 277 (DSPRL) are extracellular. A helical transmembrane segment spans residues 278 to 299 (YTYLTLLPATYNSMINPVIYAF). The Cytoplasmic segment spans residues 300–330 (RNQDVQKVLWAICCCCSTSKIPFRSRSPSDV). Cysteine 313 carries S-palmitoyl cysteine lipidation. Serine 324, serine 326, and serine 328 each carry phosphoserine.

This sequence belongs to the G-protein coupled receptor 1 family. As to expression, expressed in both the forebrain and hindbrain, with the highest level in habenula. Lower level expression in the testis. Expressed in several metabolically active peripheral tissues, although at lower levels than in the central nervous system (CNS).

The protein localises to the cell membrane. Constitutively active G-protein coupled receptor that maintains high 3'-5'-cyclic adenosine monophosphate (cAMP) levels that a plays a role in serveral processes including meiotic arrest in oocytes or neuronal development via activation of numerous intracellular signaling pathways. Acts as an essential activator of thermogenic adipocytes and drives thermogenesis via its intrinsic G(s)-coupling activity without the requirement of a ligand. Has a potential role in modulating a number of brain functions, including behavioral responses to stress, amyloid-beta peptide generation in neurons. Stimulates neurite outgrowth in cerebellar granular neurons modulated via PKA, ERK, and most strongly PI3K-mediated signaling pathways. In Mus musculus (Mouse), this protein is G-protein coupled receptor 3 (Gpr3).